The sequence spans 433 residues: Glutamate-1-semialdehyde 2,1-aminomutase (433 aa).

At Lys273 the chain carries N6-(pyridoxal phosphate)lysine.

The protein belongs to the class-III pyridoxal-phosphate-dependent aminotransferase family. HemL subfamily. Homodimer. It depends on pyridoxal 5'-phosphate as a cofactor.

The protein localises to the cytoplasm. The enzyme catalyses (S)-4-amino-5-oxopentanoate = 5-aminolevulinate. It functions in the pathway porphyrin-containing compound metabolism; protoporphyrin-IX biosynthesis; 5-aminolevulinate from L-glutamyl-tRNA(Glu): step 2/2. Its pathway is porphyrin-containing compound metabolism; chlorophyll biosynthesis. In Microcystis aeruginosa (strain NIES-843 / IAM M-2473), this protein is Glutamate-1-semialdehyde 2,1-aminomutase.